Here is a 105-residue protein sequence, read N- to C-terminus: Thioredoxin (105 aa).

Positions 2 to 105 (VKQIESKYAF…KLEATINELI (104 aa)) constitute a Thioredoxin domain. Position 3 is an N6-acetyllysine (K3). K8 is subject to N6-succinyllysine. Residues C32 and C35 each act as nucleophile in the active site. A disulfide bridge connects residues C32 and C35. An N6-acetyllysine modification is found at K39. S-nitrosocysteine is present on residues C62 and C69. C73 bears the S-nitrosocysteine; alternate mark. K94 carries the post-translational modification N6-acetyllysine; alternate. K94 carries the post-translational modification N6-succinyllysine; alternate.

This sequence belongs to the thioredoxin family. Homodimer; disulfide-linked. Interacts with TXNIP through the redox-active site. Interacts with MAP3K5 and CASP3. Interacts with APEX1; the interaction stimulates the FOS/JUN AP-1 DNA-binding activity in a redox-dependent manner. In terms of processing, in the fully reduced protein, both Cys-69 and Cys-73 are nitrosylated in response to nitric oxide (NO). When two disulfide bonds are present in the protein, only Cys-73 is nitrosylated. Cys-73 can serve as donor for nitrosylation of target proteins. In terms of tissue distribution, erythrocytes.

The protein resides in the nucleus. Its subcellular location is the cytoplasm. The protein localises to the secreted. In terms of biological role, participates in various redox reactions through the reversible oxidation of its active center dithiol to a disulfide and catalyzes dithiol-disulfide exchange reactions. Plays a role in the reversible S-nitrosylation of cysteine residues in target proteins, and thereby contributes to the response to intracellular nitric oxide. Nitrosylates the active site Cys of CASP3 in response to nitric oxide (NO), and thereby inhibits caspase-3 activity. Induces the FOS/JUN AP-1 DNA binding activity in ionizing radiation (IR) cells through its oxidation/reduction status and stimulates AP-1 transcriptional activity. This is Thioredoxin (TXN) from Sus scrofa (Pig).